The chain runs to 258 residues: Indole-3-glycerol phosphate synthase (258 aa).

This sequence belongs to the TrpC family.

It catalyses the reaction 1-(2-carboxyphenylamino)-1-deoxy-D-ribulose 5-phosphate + H(+) = (1S,2R)-1-C-(indol-3-yl)glycerol 3-phosphate + CO2 + H2O. It participates in amino-acid biosynthesis; L-tryptophan biosynthesis; L-tryptophan from chorismate: step 4/5. This Chlorobium phaeobacteroides (strain DSM 266 / SMG 266 / 2430) protein is Indole-3-glycerol phosphate synthase.